Here is a 1254-residue protein sequence, read N- to C-terminus: Structural polyprotein (1254 aa).

The tract at residues 1–33 (MFPFQPMYPMQPMPYRNPFAAPRRPWFPRTDPF) is necessary for nucleocapsid assembly and virus assembly. The segment at 33 to 68 (FLAMQVQELTRSMANLTFKQRRGAPPEGPPAKKSKR) is host transcription inhibition. Positions 41 to 48 (LTRSMANL) match the Supraphysiological nuclear export signal motif. Asn-47 carries an N-linked (GlcNAc...) asparagine; by host glycan. A disordered region spans residues 48-118 (LTFKQRRGAP…KKPGKRQRMV (71 aa)). Positions 64 to 68 (KKSKR) match the Nuclear localization signal motif. A compositionally biased stretch (basic residues) spans 76–91 (GGQRKKKKNEGKKKAK). Residues 90 to 126 (AKTGPPNLKTQNGNKKKTNKKPGKRQRMVMKLESDKT) form a binding to the viral RNA region. A phosphothreonine mark is found at Thr-92 and Thr-107. Basic residues predominate over residues 103 to 117 (NKKKTNKKPGKRQRM). Residues 111-125 (PGKRQRMVMKLESDK) are ribosome-binding. Ser-123 is modified (phosphoserine). A Peptidase S3 domain is found at 125–274 (KTFPIMLEGK…KYTPENCEQW (150 aa)). Thr-126 bears the Phosphothreonine mark. His-151 (charge relay system) is an active-site residue. The tract at residues 167 to 172 (KKASKY) is interaction with spike glycoprotein E2. Residues Asp-173 and Ser-225 each act as charge relay system in the active site. The tract at residues 259–263 (EKGVT) is interaction with spike glycoprotein E2. The segment at 275 to 286 (SLVTTMCLLANV) is functions as an uncleaved signal peptide for the precursor of protein E3/E2. The Extracellular portion of the chain corresponds to 275–702 (SLVTTMCLLA…YHRYPMSTIT (428 aa)). Cystine bridges form between Cys-281-Cys-290, Cys-352-Cys-456, Cys-355-Cys-360, Cys-423-Cys-437, Cys-484-Cys-599, Cys-533-Cys-559, and Cys-535-Cys-553. Asn-285 carries an N-linked (GlcNAc...) asparagine; by host glycan. Residues Asn-545 and Asn-651 are each glycosylated (N-linked (GlcNAc...) asparagine; by host). Residues 703–723 (GLSICAAIVAVSIAASTWLLC) traverse the membrane as a helical segment. An interaction with the capsid protein region spans residues 724–728 (RSRAS). The Cytoplasmic portion of the chain corresponds to 724 to 756 (RSRASCLTPYRLTPNAKMPLCLAVLCCARSARA). Residues Cys-729, Cys-749, and Cys-750 are each lipidated (S-palmitoyl cysteine; by host). A disulfide bridge links Cys-729 with Cys-750. A transient transmembrane before p62-6K protein processing region spans residues 735–754 (LTPNAKMPLCLAVLCCARSA). The Extracellular segment spans residues 757–768 (ETTWESLDHLWN). A helical membrane pass occupies residues 769–789 (NNQQMFWTQLLIPLAALIVVT). Arg-790 is a topological domain (cytoplasmic). A helical membrane pass occupies residues 791–811 (LLKCMCCVVPFLVVAGAAGAG). Residues 812-1224 (AYEHATTMPN…SKTAWTWLTS (413 aa)) lie on the Extracellular side of the membrane. Cystine bridges form between Cys-861-Cys-926, Cys-874-Cys-906, Cys-875-Cys-908, and Cys-880-Cys-890. Residues 896-913 (VYPFMWGGAYCFCDTENT) are E1 fusion peptide loop. Residues Asn-946 and Asn-1082 are each glycosylated (N-linked (GlcNAc...) asparagine; by host). Cystine bridges form between Cys-1071–Cys-1083, Cys-1113–Cys-1188, Cys-1118–Cys-1192, and Cys-1140–Cys-1182. A helical transmembrane segment spans residues 1225-1245 (LLGGSAVIIIIGLVLATLVAM). The Cytoplasmic segment spans residues 1246–1254 (YVLTNQKHN).

Homodimer. Homomultimer. Interacts with host karyopherin KPNA4; this interaction allows the nuclear import of the viral capsid protein. Interacts with spike glycoprotein E2. Interacts with host IRAK1; the interaction leads to inhibition of IRAK1-dependent signaling. Part of a tetrameric complex composed of host CRM1, host importin alpha/beta dimer and the viral capsid; this complex blocks the receptor-mediated transport through the nuclear pore. Interacts with host phosphatase PPP1CA; this interaction dephosphorylates the capsid protein, which increases its ability to bind to the viral genome. As to quaternary structure, the precursor of protein E3/E2 and E1 form a heterodimer shortly after synthesis. In terms of assembly, interacts with spike glycoprotein E2. The precursor of protein E3/E2 and E1 form a heterodimer shortly after synthesis. Processing of the precursor of protein E3/E2 into E2 and E3 results in a heterodimer of the spike glycoproteins E2 and E1. Spike at virion surface are constituted of three E2-E1 heterodimers. After target cell attachment and endocytosis, E1 change conformation to form homotrimers. Interacts with 6K protein. Interacts with host LDLRAD3; this interaction mediates viral entry to the host cell. Interacts with spike glycoprotein E1. Processing of the precursor of protein E3/E2 into E2 and E3 results in a heterodimer of the spike glycoproteins E2 and E1. Spike at virion surface are constituted of a trimer of E2-E1 heterodimers. Interacts with 6K protein. Interacts with host LDLRAD3; this interaction mediates viral entry to the host cell. As to quaternary structure, oligomer. Interacts with spike glycoprotein E1. Interacts with spike glycoprotein E2. In terms of processing, structural polyprotein: Specific enzymatic cleavages in vivo yield mature proteins. Capsid protein is auto-cleaved during polyprotein translation, unmasking a signal peptide at the N-terminus of the precursor of E3/E2. The remaining polyprotein is then targeted to the host endoplasmic reticulum, where host signal peptidase cleaves it into pE2, 6K and E1 proteins. pE2 is further processed to mature E3 and E2 by host furin in trans-Golgi vesicle. Post-translationally, phosphorylated on serine and threonine residues. Palmitoylated via thioester bonds. These palmitoylations may induce disruption of the C-terminus transmembrane. This would result in the reorientation of E2 C-terminus from lumenal to cytoplasmic side. In terms of processing, N-glycosylated. Post-translationally, palmitoylated via thioester bonds.

It is found in the virion. The protein resides in the host cytoplasm. Its subcellular location is the host cell membrane. The protein localises to the host nucleus. It localises to the virion membrane. It is found in the host Golgi apparatus. The protein resides in the host trans-Golgi network. Its subcellular location is the host endoplasmic reticulum. The catalysed reaction is Autocatalytic release of the core protein from the N-terminus of the togavirus structural polyprotein by hydrolysis of a -Trp-|-Ser- bond.. In terms of biological role, forms an icosahedral capsid with a T=4 symmetry composed of 240 copies of the capsid protein surrounded by a lipid membrane through which penetrate 80 spikes composed of trimers of E1-E2 heterodimers. The capsid protein binds to the viral RNA genome at a site adjacent to a ribosome binding site for viral genome translation following genome release. Possesses a protease activity that results in its autocatalytic cleavage from the nascent structural protein. Following its self-cleavage, the capsid protein transiently associates with ribosomes, and within several minutes the protein binds to viral RNA and rapidly assembles into icosahedric core particles. The resulting nucleocapsid eventually associates with the cytoplasmic domain of the spike glycoprotein E2 at the cell membrane, leading to budding and formation of mature virions. In case of infection, new virions attach to target cells and after clathrin-mediated endocytosis their membrane fuses with the host endosomal membrane. This leads to the release of the nucleocapsid into the cytoplasm, followed by an uncoating event necessary for the genomic RNA to become accessible. The uncoating might be triggered by the interaction of capsid proteins with ribosomes. Binding of ribosomes would release the genomic RNA since the same region is genomic RNA-binding and ribosome-binding. Specifically inhibits interleukin-1 receptor-associated kinase 1/IRAK1-dependent signaling during viral entry, representing a means by which the alphaviruses may evade innate immune detection and activation prior to viral gene expression. Inhibits host transcription. Forms a tetrameric complex with XPO1/CRM1 and the nuclear import receptor importin. This complex blocks the central channel of host nuclear pores thereby inhibiting the receptor-mediated nuclear transport and thus the host mRNA and rRNA transcription. The inhibition of transcription is linked to a cytopathic effect on the host cell. Provides the signal sequence for the translocation of the precursor of protein E3/E2 to the host endoplasmic reticulum. Furin-cleaved E3 remains associated with spike glycoprotein E1 and mediates pH protection of the latter during the transport via the secretory pathway. After virion release from the host cell, the assembly protein E3 is gradually released in the extracellular space. Its function is as follows. Plays a role in viral attachment to target host cell, by binding to the cell receptor LDLRAD3. Synthesized as a p62 precursor which is processed by furin at the cell membrane just before virion budding, giving rise to E2-E1 heterodimer. The p62-E1 heterodimer is stable, whereas E2-E1 is unstable and dissociate at low pH. p62 is processed at the last step, presumably to avoid E1 fusion activation before its final export to cell surface. E2 C-terminus contains a transitory transmembrane that would be disrupted by palmitoylation, resulting in reorientation of the C-terminal tail from lumenal to cytoplasmic side. This step is critical since E2 C-terminus is involved in budding by interacting with capsid proteins. This release of E2 C-terminus in cytoplasm occurs lately in protein export, and precludes premature assembly of particles at the endoplasmic reticulum membrane. Functionally, acts as a viroporin that participates in virus glycoprotein processing and transport to the plasma membrane, cell permeabilization and budding of viral particles. Disrupts the calcium homeostasis of the cell, probably at the endoplasmic reticulum level. This leads to cytoplasmic calcium elevation. Because of its lipophilic properties, the 6K protein is postulated to influence the selection of lipids that interact with the transmembrane domains of the glycoproteins, which, in turn, affects the deformability of the bilayer required for the extreme curvature that occurs as budding proceeds. Present in low amount in virions, about 3% compared to viral glycoproteins. In terms of biological role, class II viral fusion protein. Fusion activity is inactive as long as E1 is bound to E2 in mature virion. After virus attachment to cell receptor LDLRAD3 and endocytosis, acidification of the endosome induce dissociation of E1/E2 heterodimer and concomitant trimerization of the E1 subunits. This E1 trimer is fusion active, and promotes release of viral nucleocapsid in cytoplasm after endosome and viral membrane fusion. Efficient fusion requires the presence of cholesterol and sphingolipid in the target membrane. The chain is Structural polyprotein from Venezuelan equine encephalitis virus (strain Everglades Fe3-7c) (VEEV).